The chain runs to 121 residues: uncharacterized protein (121 aa).

The signal sequence occupies residues 1 to 31 (MILNNKGFIRILEATIAGIMVILVFSYLVMS).

It to B.burgdorferi BB0465 N-terminal region.

This is an uncharacterized protein from Methanocaldococcus jannaschii (strain ATCC 43067 / DSM 2661 / JAL-1 / JCM 10045 / NBRC 100440) (Methanococcus jannaschii).